The primary structure comprises 550 residues: Hydroxylamine reductase (550 aa).

Residues C3, C6, C18, and C25 each coordinate [2Fe-2S] cluster. Hybrid [4Fe-2O-2S] cluster-binding residues include H249, E273, C317, C405, C433, C458, E492, and K494. C405 carries the post-translational modification Cysteine persulfide.

The protein belongs to the HCP family. It depends on [2Fe-2S] cluster as a cofactor. The cofactor is hybrid [4Fe-2O-2S] cluster.

It localises to the cytoplasm. It carries out the reaction A + NH4(+) + H2O = hydroxylamine + AH2 + H(+). Catalyzes the reduction of hydroxylamine to form NH(3) and H(2)O. This chain is Hydroxylamine reductase, found in Enterobacter sp. (strain 638).